A 345-amino-acid polypeptide reads, in one-letter code: Linoleate 10R-lipoxygenase COP4 (345 aa).

Mg(2+) contacts are provided by Asp87, Asp91, Asn222, Ser226, and Glu230. The short motif at 87 to 91 (DEISD) is the DDXXD motif element.

This sequence belongs to the terpene synthase family. Requires Mg(2+) as cofactor.

The enzyme catalyses (2E,6E)-farnesyl diphosphate + H2O = cubebol + diphosphate. The catalysed reaction is (2E,6E)-farnesyl diphosphate = beta-copaene + diphosphate. It catalyses the reaction (2E,6E)-farnesyl diphosphate = beta-cubebene + diphosphate. It carries out the reaction (2E,6E)-farnesyl diphosphate = (+)-sativene + diphosphate. In terms of biological role, sesquiterpene synthase that catalyzes the cyclization of farnesyl diphosphate (FPP) into multiple products, including germacrene D, beta-copaene, beta-cubebene, (+)-sativene and cubebol, a natural sesquiterpene alcohol used in the food industry for its cooling and refreshing taste. Terpenoid hydrocarbons resulting from cyclization of farnesyl diphosphate are intermediates in the biosynthesis of biologically active compounds such as antibiotics, toxins and pheromones. The polypeptide is Linoleate 10R-lipoxygenase COP4 (COP4) (Coprinopsis cinerea (strain Okayama-7 / 130 / ATCC MYA-4618 / FGSC 9003) (Inky cap fungus)).